Here is a 597-residue protein sequence, read N- to C-terminus: Protein IQ-DOMAIN 29 (597 aa).

Positions 1–31 (MGKTPSPGKWIKSLLGKKSSKSSLEKGGEKL) are disordered. IQ domains lie at 106–134 (LEEA…GITR), 135–153 (VQAV…ATYS), and 157–183 (GIVK…QKTN). The tract at residues 159-173 (VKVQALVRGKKARSS) is calmodulin-binding. Positions 264-271 (KKRSFQAV) match the Nuclear localization signal 1 motif. 2 disordered regions span residues 268-379 (FQAV…KKEI) and 407-597 (LIPV…EWKR). The span at 289–300 (STTANSSTSRST) shows a compositional bias: low complexity. Residues 319 to 329 (ELSKIENDKSK) show a composition bias toward basic and acidic residues. Positions 356–363 (HKKASLSN) match the Nuclear localization signal 2 motif. Basic and acidic residues predominate over residues 414–463 (KESDLDKDEKSLVLDKPEQDELRTAERDDKAEEELKTAERDDSAEEKIQE). Over residues 467–480 (QISSENGNVASENT) the composition is skewed to polar residues. The segment covering 481-500 (KPSDRRASLPAKIENHHQDD) has biased composition (basic and acidic residues). The span at 572 to 584 (GSMNSDRSFSSSK) shows a compositional bias: polar residues. A compositionally biased stretch (basic and acidic residues) spans 585 to 597 (DIGDKSTKAEWKR).

Belongs to the IQD family. Binds to multiple calmodulin (CaM) in the presence of Ca(2+) and CaM-like proteins.

It is found in the nucleus. The protein resides in the nucleus envelope. Its subcellular location is the cytoplasm. It localises to the cytoskeleton. The protein localises to the cell membrane. Functionally, may be involved in cooperative interactions with calmodulins or calmodulin-like proteins. Recruits calmodulin proteins to microtubules, thus being a potential scaffold in cellular signaling and trafficking. May associate with nucleic acids and regulate gene expression at the transcriptional or post-transcriptional level. The protein is Protein IQ-DOMAIN 29 of Arabidopsis thaliana (Mouse-ear cress).